The sequence spans 505 residues: Katanin p60 ATPase-containing subunit A-like 2 (505 aa).

The LisH domain maps to 25-57; the sequence is RRKNLLILIMHYLLQEGYVDSANSLEQETKISS. 2 disordered regions span residues 94-127 and 140-167; these read LDHD…IGQQ and RTNG…EASE. 2 stretches are compositionally biased toward polar residues: residues 114–127 and 155–164; these read GSNS…IGQQ and QESGGNSPQE. 298–305 serves as a coordination point for ATP; sequence GPPGTGKT.

It belongs to the AAA ATPase family. Katanin p60 subunit A1 subfamily. A-like 2 sub-subfamily.

The protein localises to the cytoplasm. Its subcellular location is the cytoskeleton. It localises to the spindle. The protein resides in the spindle pole. The catalysed reaction is n ATP + n H2O + a microtubule = n ADP + n phosphate + (n+1) alpha/beta tubulin heterodimers.. Functionally, severs microtubules in vitro in an ATP-dependent manner. This activity may promote rapid reorganization of cellular microtubule arrays. This Xenopus laevis (African clawed frog) protein is Katanin p60 ATPase-containing subunit A-like 2 (katnal2).